The chain runs to 749 residues: uncharacterized protein (749 aa).

One can recognise a Helicase ATP-binding domain in the interval 63-243 (FQYVQKGESI…QLTGKPMRLV (181 aa)). 76 to 83 (TPTASGKT) contacts ATP. Positions 185-188 (DELH) match the DEVH box motif. One can recognise a Helicase C-terminal domain in the interval 276-430 (EVNELAKEFL…SARINPENLI (155 aa)).

Belongs to the helicase family.

This is an uncharacterized protein from Bacillus subtilis (strain 168).